The chain runs to 224 residues: Ribose-5-phosphate isomerase A (224 aa).

Substrate contacts are provided by residues 32 to 35 (TGST), 85 to 88 (DGAD), and 98 to 101 (KGGG). Residue glutamate 107 is the Proton acceptor of the active site. Lysine 125 is a binding site for substrate.

This sequence belongs to the ribose 5-phosphate isomerase family. As to quaternary structure, homodimer.

The enzyme catalyses aldehydo-D-ribose 5-phosphate = D-ribulose 5-phosphate. The protein operates within carbohydrate degradation; pentose phosphate pathway; D-ribose 5-phosphate from D-ribulose 5-phosphate (non-oxidative stage): step 1/1. Catalyzes the reversible conversion of ribose-5-phosphate to ribulose 5-phosphate. This Pseudomonas putida (strain GB-1) protein is Ribose-5-phosphate isomerase A.